Here is a 407-residue protein sequence, read N- to C-terminus: Tryptophan synthase beta chain (407 aa).

Lys91 bears the N6-(pyridoxal phosphate)lysine mark.

Belongs to the TrpB family. In terms of assembly, tetramer of two alpha and two beta chains. Pyridoxal 5'-phosphate is required as a cofactor.

It carries out the reaction (1S,2R)-1-C-(indol-3-yl)glycerol 3-phosphate + L-serine = D-glyceraldehyde 3-phosphate + L-tryptophan + H2O. The protein operates within amino-acid biosynthesis; L-tryptophan biosynthesis; L-tryptophan from chorismate: step 5/5. Its function is as follows. The beta subunit is responsible for the synthesis of L-tryptophan from indole and L-serine. The protein is Tryptophan synthase beta chain of Streptococcus pneumoniae (strain Hungary19A-6).